A 517-amino-acid chain; its full sequence is Ubiquitin carboxyl-terminal hydrolase 30 (517 aa).

At 1–35 the chain is on the mitochondrial intermembrane side; it reads MLSSRAEAAMTAADRAIQRFLRTGAAVRYKVMKNW. The helical transmembrane segment at 36 to 56 threads the bilayer; it reads GVIGGIAAALAAGIYVIWGPI. Residues 57–517 lie on the Cytoplasmic side of the membrane; sequence TERKKRRKGL…HQSQECKSEE (461 aa). A USP domain is found at 68 to 502; the sequence is PGLVNLGNTC…SAYLLFYERV (435 aa). The active-site Nucleophile is Cys77. Glycyl lysine isopeptide (Lys-Gly) (interchain with G-Cter in ubiquitin) cross-links involve residues Lys235 and Lys289. The interval 364–395 is disordered; it reads SQHNPKLNKNPGPTLELQDGPGAPTPVLNQPG. Residue His452 is the Proton acceptor of the active site.

This sequence belongs to the peptidase C19 family. Post-translationally, ubiquitinated by parkin (PRKN) at Lys-235 and Lys-289, leading to its degradation. Expressed in skeletal muscle, pancreas, liver and kidney.

It localises to the mitochondrion outer membrane. It catalyses the reaction Thiol-dependent hydrolysis of ester, thioester, amide, peptide and isopeptide bonds formed by the C-terminal Gly of ubiquitin (a 76-residue protein attached to proteins as an intracellular targeting signal).. Inhibited by the diterpenoid derivative 15-oxospiramilactone (S3). In terms of biological role, deubiquitinating enzyme tethered to the mitochondrial outer membrane that acts as a key inhibitor of mitophagy by counteracting the action of parkin (PRKN): hydrolyzes ubiquitin attached by parkin on target proteins, such as RHOT1/MIRO1 and TOMM20, thereby blocking parkin's ability to drive mitophagy. Preferentially cleaves 'Lys-6'- and 'Lys-11'-linked polyubiquitin chains, 2 types of linkage that participate in mitophagic signaling. Does not cleave efficiently polyubiquitin phosphorylated at 'Ser-65'. Acts as a negative regulator of mitochondrial fusion by mediating deubiquitination of MFN1 and MFN2. This chain is Ubiquitin carboxyl-terminal hydrolase 30, found in Homo sapiens (Human).